We begin with the raw amino-acid sequence, 412 residues long: Argininosuccinate synthase (412 aa).

10-18 contributes to the ATP binding site; sequence AYSGGLDTS. Residue Tyr-89 participates in L-citrulline binding. Position 119 (Gly-119) interacts with ATP. 3 residues coordinate L-aspartate: Thr-121, Asn-125, and Asp-126. Asn-125 provides a ligand contact to L-citrulline. L-citrulline-binding residues include Arg-129, Ser-177, Glu-261, and Tyr-273.

This sequence belongs to the argininosuccinate synthase family. Type 1 subfamily. Homotetramer.

It is found in the cytoplasm. The catalysed reaction is L-citrulline + L-aspartate + ATP = 2-(N(omega)-L-arginino)succinate + AMP + diphosphate + H(+). It functions in the pathway amino-acid biosynthesis; L-arginine biosynthesis; L-arginine from L-ornithine and carbamoyl phosphate: step 2/3. The chain is Argininosuccinate synthase from Bifidobacterium longum subsp. infantis (strain ATCC 15697 / DSM 20088 / JCM 1222 / NCTC 11817 / S12).